The sequence spans 305 residues: Acetaldehyde dehydrogenase 5 (305 aa).

11–14 (SGNI) contributes to the NAD(+) binding site. Cys-130 functions as the Acyl-thioester intermediate in the catalytic mechanism. NAD(+) contacts are provided by residues 161–169 (SIGPGTRAN) and Asn-272.

Belongs to the acetaldehyde dehydrogenase family.

It carries out the reaction acetaldehyde + NAD(+) + CoA = acetyl-CoA + NADH + H(+). The sequence is that of Acetaldehyde dehydrogenase 5 from Dechloromonas aromatica (strain RCB).